The sequence spans 173 residues: NADH-ubiquinone oxidoreductase chain 6 (173 aa).

Transmembrane regions (helical) follow at residues 1–21, 25–45, 53–73, 82–102, and 141–161; these read MVYF…AVAS, PYFA…LLVG, LVLF…TAAL, WGDW…FFVG, and GIML…ILEL.

This sequence belongs to the complex I subunit 6 family.

It is found in the mitochondrion membrane. It carries out the reaction a ubiquinone + NADH + 5 H(+)(in) = a ubiquinol + NAD(+) + 4 H(+)(out). Functionally, core subunit of the mitochondrial membrane respiratory chain NADH dehydrogenase (Complex I) that is believed to belong to the minimal assembly required for catalysis. Complex I functions in the transfer of electrons from NADH to the respiratory chain. The immediate electron acceptor for the enzyme is believed to be ubiquinone. The chain is NADH-ubiquinone oxidoreductase chain 6 (MT-ND6) from Squalus acanthias (Spiny dogfish).